Reading from the N-terminus, the 114-residue chain is Beta-microseminoprotein E1 (114 aa).

An N-terminal signal peptide occupies residues 1–20 (MNVLLGGLVIFATFVTLCNG). 5 disulfide bridges follow: C22/C70, C38/C62, C57/C93, C60/C69, and C84/C107.

It belongs to the beta-microseminoprotein family.

It localises to the secreted. The sequence is that of Beta-microseminoprotein E1 (MSPE) from Saguinus oedipus (Cotton-top tamarin).